The primary structure comprises 372 residues: MVGSLACHILALPSLHFLVSLTGMSRPSFIEFTPAADSSDLWKDGQQQPQQEKAEPVLDGAAARAFYEALIADDSSSSKPQRAEPMRERKKKRRRVTREPAAAGVPRQGRALEDEDRMAQWILLAAQNGDLTELRRLLEPQEAGGAGGNINARDAFWWTPLMCAARAGQGAAVRYLLGRGAAWVGVCDLGGRDAAQLAEEAGFPEVARMVRESHGETRSPENQNRSTPSSSQFCEDCGAHFEDSNHHTSTAHLLSLSRRPQPSNLPLGVPTSSPGFRLLLRGGWEPGMGLGPRGEGRANPIPTILKRDQEGLGYRSPPQPRVTHFAARDTRAVSGRERVPRVATLSQRENRRQEEKGRAWERDLRLYMNLEF.

A disordered region spans residues 74–110; it reads DSSSSKPQRAEPMRERKKKRRRVTREPAAAGVPRQGR. 2 ANK repeats span residues 124–155 and 156–186; these read LAAQNGDLTELRRLLEPQEAGGAGGNINARDA and FWWTPLMCAARAGQGAAVRYLLGRGAAWVGV. 2 disordered regions span residues 211-233 and 251-271; these read RESHGETRSPENQNRSTPSSSQF and AHLLSLSRRPQPSNLPLGVPT. A compositionally biased stretch (polar residues) spans 220 to 233; the sequence is PENQNRSTPSSSQF. The region spanning 271 to 317 is the G-patch domain; it reads TSSPGFRLLLRGGWEPGMGLGPRGEGRANPIPTILKRDQEGLGYRSP. A Glycyl lysine isopeptide (Lys-Gly) (interchain with G-Cter in SUMO2) cross-link involves residue Lys-306. Composition is skewed to basic and acidic residues over residues 330-340 and 348-357; these read TRAVSGRERVP and RENRRQEEKG. Residues 330–357 are disordered; sequence TRAVSGRERVPRVATLSQRENRRQEEKG.

The polypeptide is G patch domain and ankyrin repeat-containing protein 1 (Gpank1) (Mus musculus (Mouse)).